A 958-amino-acid chain; its full sequence is Voltage-gated inwardly rectifying potassium channel KCNH6 (958 aa).

At Met1–Trp261 the chain is on the cytoplasmic side. The 30-residue stretch at Ile41 to Thr70 folds into the PAS domain. A PAC domain is found at Cys92–Leu144. Residues Leu262–Leu282 traverse the membrane as a helical segment. The Extracellular segment spans residues Ser283–Ser298. A helical membrane pass occupies residues Pro299–Phe319. Residues Arg320 to His340 lie on the Cytoplasmic side of the membrane. A helical membrane pass occupies residues Tyr341–Phe361. Over Arg362–Thr370 the chain is Extracellular. The helical; Voltage-sensor transmembrane segment at Leu371–Asp391 threads the bilayer. At Arg392–Ala398 the chain is on the cytoplasmic side. The chain crosses the membrane as a helical span at residues Ala399 to Trp419. Topologically, residues Tyr420–Tyr463 are extracellular. The N-linked (GlcNAc...) (complex) asparagine glycan is linked to Asn449. Positions Val464–Pro484 form an intramembrane region, pore-forming. Positions Ser476 to Asn481 match the Selectivity filter motif. The Extracellular portion of the chain corresponds to Asn485–Lys490. A helical membrane pass occupies residues Val491 to Val511. Over Ser512 to His958 the chain is Cytoplasmic. Residues Ala594–Leu694 are cNMP-binding domain. 2 disordered regions span residues Gly720–Ser751 and Thr845–Ala910. A compositionally biased stretch (polar residues) spans Ser724–Asp745.

The protein belongs to the potassium channel family. H (Eag) (TC 1.A.1.20) subfamily. Kv11.2/KCNH6 sub-subfamily. As to quaternary structure, the potassium channel is probably composed of a homo- or heterotetrameric complex of pore-forming alpha subunits that can associate only within their subfamily. In terms of tissue distribution, expressed in prolactin-secreting adenomas.

It is found in the cell membrane. It catalyses the reaction K(+)(in) = K(+)(out). Pore-forming (alpha) subunit of voltage-gated inwardly rectifying potassium channel. Characterized by unusual gating kinetics by producing relatively small outward currents during membrane depolarization and large inward currents during subsequent repolarization which reflect a rapid inactivation during depolarization and quick recovery from inactivation but slow deactivation (closing) during repolarization. Activates even more slowly than KCNH2. This Homo sapiens (Human) protein is Voltage-gated inwardly rectifying potassium channel KCNH6.